A 166-amino-acid chain; its full sequence is Lymphocyte antigen 6G6e (166 aa).

An N-terminal signal peptide occupies residues 1–18 (MGPSSAFLGVLFLSGTLG). The UPAR/Ly6 domain maps to 28-151 (LRCYTCSFAK…PPPNLPLMTL (124 aa)). 4 disulfides stabilise this stretch: Cys30/Cys52, Cys33/Cys39, Cys110/Cys129, and Cys130/Cys135.

As to quaternary structure, interacts with CHRNA4. Post-translationally, O-glycosylated. Contains sialic acid residues.

It localises to the cell surface. The protein localises to the cell membrane. Its subcellular location is the cell projection. Believed to act as a modulator of nicotinic acetylcholine receptors (nAChRs) activity. In vitro potentiates alpha-3:beta-4-containing nAChRs maximum response by increasing peak current and slowing down receptor desensitization; the activity is dependent on its cell surface localization. This is Lymphocyte antigen 6G6e (Ly6g6e) from Mus musculus (Mouse).